The primary structure comprises 217 residues: Ribosomal RNA small subunit methyltransferase G (217 aa).

Residues G78, F83, 129–130 (AE), and R146 contribute to the S-adenosyl-L-methionine site.

This sequence belongs to the methyltransferase superfamily. RNA methyltransferase RsmG family.

The protein resides in the cytoplasm. It catalyses the reaction guanosine(527) in 16S rRNA + S-adenosyl-L-methionine = N(7)-methylguanosine(527) in 16S rRNA + S-adenosyl-L-homocysteine. Specifically methylates the N7 position of guanine in position 527 of 16S rRNA. The polypeptide is Ribosomal RNA small subunit methyltransferase G (Geobacter sp. (strain M21)).